A 443-amino-acid chain; its full sequence is Phosphoglucosamine mutase (443 aa).

Ser102 acts as the Phosphoserine intermediate in catalysis. Residues Ser102, Asp241, Asp243, and Asp245 each contribute to the Mg(2+) site. Ser102 carries the phosphoserine modification.

The protein belongs to the phosphohexose mutase family. It depends on Mg(2+) as a cofactor. In terms of processing, activated by phosphorylation.

The enzyme catalyses alpha-D-glucosamine 1-phosphate = D-glucosamine 6-phosphate. In terms of biological role, catalyzes the conversion of glucosamine-6-phosphate to glucosamine-1-phosphate. The polypeptide is Phosphoglucosamine mutase (Acinetobacter baylyi (strain ATCC 33305 / BD413 / ADP1)).